Consider the following 414-residue polypeptide: Carboxynorspermidine synthase (414 aa).

The protein belongs to the saccharopine dehydrogenase family. Carboxynorspermidine synthase subfamily.

It catalyses the reaction carboxynorspermidine + NADP(+) + H2O = L-aspartate 4-semialdehyde + propane-1,3-diamine + NADPH + H(+). The enzyme catalyses carboxyspermidine + NADP(+) + H2O = L-aspartate 4-semialdehyde + putrescine + NADPH + H(+). Its function is as follows. Involved in norspermidine biosynthesis. Catalyzes the synthesis of carboxynorspermidine from L-aspartate 4-semialdehyde and 1,3-diaminopropane. Is also active with putrescine as a substrate. Essential for biofilm formation. The polypeptide is Carboxynorspermidine synthase (Vibrio cholerae serotype O1 (strain ATCC 39315 / El Tor Inaba N16961)).